Consider the following 144-residue polypeptide: Transcriptional regulator SlyA (144 aa).

One can recognise an HTH marR-type domain in the interval 2 to 135 (ESPLGSDLAR…LITLIAKLEH (134 aa)). A DNA-binding region (H-T-H motif) is located at residues 49 to 72 (QIQLAKAIGIEQPSLVRTLDQLEE).

This sequence belongs to the SlyA family. As to quaternary structure, homodimer.

Functionally, transcription regulator that can specifically activate or repress expression of target genes. The protein is Transcriptional regulator SlyA of Shigella boydii serotype 18 (strain CDC 3083-94 / BS512).